The sequence spans 345 residues: D-alanine--D-alanine ligase (345 aa).

One can recognise an ATP-grasp domain in the interval 133–340 (KLYAKERGVK…IDYRYIHQIQ (208 aa)). 162-211 (PLIVKPLRLGSSIGVSIAKNRQELDYALDVAFEFDEAALLEPFMQGIKEY) contacts ATP. The Mg(2+) site is built by D284, E296, and N298.

This sequence belongs to the D-alanine--D-alanine ligase family. The cofactor is Mg(2+). Mn(2+) serves as cofactor.

The protein localises to the cytoplasm. The catalysed reaction is 2 D-alanine + ATP = D-alanyl-D-alanine + ADP + phosphate + H(+). It participates in cell wall biogenesis; peptidoglycan biosynthesis. Cell wall formation. The chain is D-alanine--D-alanine ligase from Wolinella succinogenes (strain ATCC 29543 / DSM 1740 / CCUG 13145 / JCM 31913 / LMG 7466 / NCTC 11488 / FDC 602W) (Vibrio succinogenes).